The chain runs to 178 residues: Large ribosomal subunit protein uL6 (178 aa).

This sequence belongs to the universal ribosomal protein uL6 family. As to quaternary structure, part of the 50S ribosomal subunit.

Functionally, this protein binds to the 23S rRNA, and is important in its secondary structure. It is located near the subunit interface in the base of the L7/L12 stalk, and near the tRNA binding site of the peptidyltransferase center. The chain is Large ribosomal subunit protein uL6 from Corynebacterium aurimucosum (strain ATCC 700975 / DSM 44827 / CIP 107346 / CN-1) (Corynebacterium nigricans).